Here is a 553-residue protein sequence, read N- to C-terminus: Sulfatase (553 aa).

An N-terminal signal peptide occupies residues methionine 1–serine 25. Ca(2+) is bound by residues aspartate 43, aspartate 44, and cysteine 88. The active-site Nucleophile is cysteine 88. Position 88 is a 3-oxoalanine (Cys) (cysteine 88). Histidine 159 is a catalytic residue. Residues aspartate 350 and asparagine 351 each contribute to the Ca(2+) site.

Belongs to the sulfatase family. It depends on Ca(2+) as a cofactor. Post-translationally, the conversion to 3-oxoalanine (also known as C-formylglycine, FGly), of a serine or cysteine residue in prokaryotes and of a cysteine residue in eukaryotes, is critical for catalytic activity. This post-translational modification is severely defective in multiple sulfatase deficiency (MSD).

It is found in the secreted. In terms of biological role, sulfatase that may be involved in ulvan degradation. Ulvan is the main polysaccharide component of the Ulvales (green seaweed) cell wall. It is composed of disaccharide building blocks comprising 3-sulfated rhamnose (Rha3S) linked to D-glucuronic acid (GlcA), L-iduronic acid (IduA), or D-xylose (Xyl). In Formosa agariphila (strain DSM 15362 / KCTC 12365 / LMG 23005 / KMM 3901 / M-2Alg 35-1), this protein is Sulfatase.